We begin with the raw amino-acid sequence, 485 residues long: Cytoplasmic tRNA 2-thiolation protein 2 (485 aa).

This sequence belongs to the CTU2/NCS2 family.

The protein localises to the cytoplasm. It functions in the pathway tRNA modification; 5-methoxycarbonylmethyl-2-thiouridine-tRNA biosynthesis. Functionally, plays a central role in 2-thiolation of mcm(5)S(2)U at tRNA wobble positions of tRNA(Lys), tRNA(Glu) and tRNA(Gln). May act by forming a heterodimer with NCS6 that ligates sulfur from thiocarboxylated URM1 onto the uridine of tRNAs at wobble position. Prior mcm(5) tRNA modification by the elongator complex is required for 2-thiolation. May also be involved in protein urmylation. The protein is Cytoplasmic tRNA 2-thiolation protein 2 of Vanderwaltozyma polyspora (strain ATCC 22028 / DSM 70294 / BCRC 21397 / CBS 2163 / NBRC 10782 / NRRL Y-8283 / UCD 57-17) (Kluyveromyces polysporus).